The primary structure comprises 773 residues: Ion-translocating oxidoreductase complex subunit C (773 aa).

2 4Fe-4S ferredoxin-type domains span residues 368 to 398 (ELTS…QQLQ) and 408 to 437 (KCEE…VQYY). [4Fe-4S] cluster-binding residues include C378, C381, C384, C388, C417, C420, C423, and C427. Positions 460 to 490 (RFEEKKARMERDKAERENRFKQAAEDRRKEM) are enriched in basic and acidic residues. Disordered stretches follow at residues 460-496 (RFEE…QGGS) and 533-773 (AKQA…EEKD). The segment covering 533-545 (AKQAEAAQSGASE) has biased composition (low complexity). The segment covering 550–572 (EMAKLREERKRQARERKAQKGEV) has biased composition (basic and acidic residues). A compositionally biased stretch (low complexity) spans 605 to 618 (TESAAQPAQATPSS). 4 stretches are compositionally biased toward polar residues: residues 643 to 657 (GTES…TPSS), 684 to 697 (TEST…TPSS), 724 to 737 (TKST…TPSS), and 761 to 773 (QQSS…EEKD).

The protein belongs to the 4Fe4S bacterial-type ferredoxin family. RnfC subfamily. The complex is composed of six subunits: RnfA, RnfB, RnfC, RnfD, RnfE and RnfG. Requires [4Fe-4S] cluster as cofactor.

The protein localises to the cell inner membrane. In terms of biological role, part of a membrane-bound complex that couples electron transfer with translocation of ions across the membrane. The sequence is that of Ion-translocating oxidoreductase complex subunit C from Vibrio cholerae serotype O1 (strain ATCC 39541 / Classical Ogawa 395 / O395).